We begin with the raw amino-acid sequence, 384 residues long: Glucans biosynthesis protein C (384 aa).

10 consecutive transmembrane segments (helical) span residues 17 to 37 (AWLM…THSW), 54 to 74 (FIHA…SYML), 91 to 111 (VGIP…ILLQ), 140 to 160 (LWFL…FTWF), 173 to 193 (AISL…YAAI), 212 to 232 (FIVM…LAFI), 240 to 260 (FTTP…AYLL), 274 to 294 (TESV…FSLG), 311 to 331 (ASLF…AYIT), and 338 to 358 (LIGF…LYEI).

Belongs to the acyltransferase 3 family. OpgC subfamily.

The protein localises to the cell membrane. The protein operates within glycan metabolism; osmoregulated periplasmic glucan (OPG) biosynthesis. Its function is as follows. Necessary for the succinyl substitution of periplasmic glucans. Could catalyze the transfer of succinyl residues from the cytoplasmic side of the membrane to the nascent glucan backbones on the periplasmic side of the membrane. In Salmonella gallinarum (strain 287/91 / NCTC 13346), this protein is Glucans biosynthesis protein C.